Here is a 1318-residue protein sequence, read N- to C-terminus: Ubiquitin carboxyl-terminal hydrolase 19 (1318 aa).

A disordered region spans residues 1–109; it reads MSGGASATGP…GACEDPHDLL (109 aa). Residues 1–1291 are Cytoplasmic-facing; that stretch reads MSGGASATGP…TTPDEGCLRY (1291 aa). Residues 28 to 44 are compositionally biased toward basic and acidic residues; the sequence is DRANQESKDGDPRKETG. Polar residues predominate over residues 83–94; it reads PSSSGSASTPQE. The segment covering 95–107 has biased composition (basic and acidic residues); it reads EQTKEGACEDPHD. A CS 1 domain is found at 113–202; the sequence is TPELLLDWRQ…VPMLTWPSLL (90 aa). Residues 234–255 are disordered; it reads KAVPPGNDPVSPAMVRSRNPGK. A Phosphoserine modification is found at S244. The CS 2 domain maps to 282–384; that stretch reads LAFVKNDSYE…RQSQRWGGLE (103 aa). The segment at 390–479 is disordered; it reads VGGAKVAVPT…PMPHSPVSGD (90 aa). Composition is skewed to basic and acidic residues over residues 420–436 and 447–457; these read EEAR…RSED and PMEHVTPKPET. Residues 497-1214 enclose the USP domain; it reads TGLVNLGNTC…YAYVLFYRRR (718 aa). C506 functions as the Nucleophile in the catalytic mechanism. Residues C791, C794, C808, C811, C817, C821, H829, and C833 each contribute to the Zn(2+) site. The MYND-type zinc finger occupies 791 to 833; that stretch reads CAACQRKQQSEDEKLKRCTRCYRVGYCNQLCQKTHWPDHKGLC. Catalysis depends on H1165, which acts as the Proton acceptor. Basic and acidic residues predominate over residues 1218–1232; sequence VERPPRAGHSEHHPD. The interval 1218–1239 is disordered; it reads VERPPRAGHSEHHPDLGPAAEA. The chain crosses the membrane as a helical span at residues 1292–1312; the sequence is FVLGTVAALVALVLNVFYPLV. Residues 1313–1318 are Lumenal-facing; that stretch reads SQSRWR.

The protein belongs to the peptidase C19 family. In terms of assembly, interacts with RNF123. Interacts with BIRC2/c-IAP1, BIRC3/c-IAP2 and XIAP/BIRC4. Interacts with HIF1A (via N-terminus). Interacts (via N-terminus) with HSP90AA1; this interaction activates the deubiquitinase activity of USP19.

The protein resides in the endoplasmic reticulum membrane. It carries out the reaction Thiol-dependent hydrolysis of ester, thioester, amide, peptide and isopeptide bonds formed by the C-terminal Gly of ubiquitin (a 76-residue protein attached to proteins as an intracellular targeting signal).. Functionally, deubiquitinating enzyme that regulates the degradation of various proteins by removing ubiquitin moieties, thereby preventing their proteasomal degradation. Stabilizes RNF123, which promotes CDKN1B degradation and contributes to cell proliferation. Decreases the levels of ubiquitinated proteins during skeletal muscle formation and acts to repress myogenesis. Modulates transcription of major myofibrillar proteins. Also involved in turnover of endoplasmic-reticulum-associated degradation (ERAD) substrates. Mechanistically, deubiquitinates and thereby stabilizes several E3 ligases involved in the ERAD pathway including SYVN1 or MARCHF6. Regulates the stability of other E3 ligases including BIRC2/c-IAP1 and BIRC3/c-IAP2 by preventing their ubiquitination. Required for cells to mount an appropriate response to hypoxia by rescuing HIF1A from degradation in a non-catalytic manner and by mediating the deubiquitination of FUNDC1. Attenuates mitochondrial damage and ferroptosis by targeting and stabilizing NADPH oxidase 4/NOX4. Negatively regulates TNF-alpha- and IL-1beta-triggered NF-kappa-B activation by hydrolyzing 'Lys-27'- and 'Lys-63'-linked polyubiquitin chains from MAP3K7. Modulates also the protein level and aggregation of polyQ-expanded huntingtin/HTT through HSP90AA1. This is Ubiquitin carboxyl-terminal hydrolase 19 (USP19) from Homo sapiens (Human).